The sequence spans 337 residues: Glyceraldehyde-3-phosphate dehydrogenase 1 (337 aa).

NAD(+)-binding positions include 11–12 (RI), Asp-33, and Arg-78. Residues 149–151 (SCT), Thr-180, 209–210 (TG), and Arg-232 contribute to the D-glyceraldehyde 3-phosphate site. The active-site Nucleophile is the Cys-150. Asn-318 lines the NAD(+) pocket.

Belongs to the glyceraldehyde-3-phosphate dehydrogenase family. Homotetramer.

The protein resides in the cytoplasm. It carries out the reaction D-glyceraldehyde 3-phosphate + phosphate + NAD(+) = (2R)-3-phospho-glyceroyl phosphate + NADH + H(+). It functions in the pathway carbohydrate degradation; glycolysis; pyruvate from D-glyceraldehyde 3-phosphate: step 1/5. This is Glyceraldehyde-3-phosphate dehydrogenase 1 (gpd1) from Agaricus bisporus (White button mushroom).